We begin with the raw amino-acid sequence, 377 residues long: uncharacterized protein (377 aa).

A run of 10 helical transmembrane segments spans residues 4-24, 41-61, 85-105, 134-154, 159-179, 192-212, 278-298, 301-321, 327-347, and 356-376; these read LLTPWRGVAAGFLLNGILLGT, ASFGVLLLLLGLGALISFPIT, IAALGLAPTIPLLAIALFLFG, FHAMWSVGAVLGAAGGYIATV, VYVHFLVTAVTIGGLLGPFLL, GAVGLVLPNSGLFLVGLIALA, VFGILLIVLGETLPLVVAGFV, GVGYAAVLPLAFSRAAADLVV, IASVAIFAYGAMTLGPFAIGL, and LCFFIVGLFAALVAVLAPVLK.

To R.meliloti MosC.

It is found in the cell membrane. In terms of biological role, could be involved in a transport system. This is an uncharacterized protein from Sinorhizobium fredii (strain NBRC 101917 / NGR234).